The primary structure comprises 382 residues: MKAVHFGAGNIGRGFIGKVLSDSNVAVTFADVDAPLVDQLCHDQSYKVKVVGSKCQIDTVTHVTAVNSTSDDVIERIVHTDLVTTAVGPNVLNIIAKTIAKGLTKRFEANNESPLNIIACENMVRGTTHLKNEVYSHLDDSFHARCDELVGFVDSAVDRIVPPSEAANDDLLEVTVESFSEWIVDEKQFKGGVPNIAGMEKTDNLMAFVERKLFTLNTGHCITAYLGALKGHETVRDAIQDPEIRTEVKAAMEESGEVLIRRYGFDKELHAAYIEKILGRFANPYLRDEIDRVARQPIRKLGENDRLIKPLLGTIEYGIENKTLLKGIAAAFKYVNDTDPQAVELQTHLQESGLKATLAHYTGLNENSSEAKKIEAIFTTLN.

An NAD(+)-binding site is contributed by 3 to 14 (AVHFGAGNIGRG).

The protein belongs to the mannitol dehydrogenase family.

It carries out the reaction D-mannitol 1-phosphate + NAD(+) = beta-D-fructose 6-phosphate + NADH + H(+). The chain is Mannitol-1-phosphate 5-dehydrogenase from Aliivibrio salmonicida (strain LFI1238) (Vibrio salmonicida (strain LFI1238)).